Reading from the N-terminus, the 349-residue chain is Protein-glutamate methylesterase/protein-glutamine glutaminase (349 aa).

Positions 5–122 (RVLSVDDSAL…REGMLAYSEM (118 aa)) constitute a Response regulatory domain. A 4-aspartylphosphate modification is found at Asp-56. The CheB-type methylesterase domain occupies 152-344 (LLSSEKLIAI…QQMLAKISAG (193 aa)). Residues Ser-164, His-190, and Asp-286 contribute to the active site.

Belongs to the CheB family. In terms of processing, phosphorylated by CheA. Phosphorylation of the N-terminal regulatory domain activates the methylesterase activity.

It is found in the cytoplasm. The catalysed reaction is [protein]-L-glutamate 5-O-methyl ester + H2O = L-glutamyl-[protein] + methanol + H(+). It carries out the reaction L-glutaminyl-[protein] + H2O = L-glutamyl-[protein] + NH4(+). Functionally, involved in chemotaxis. Part of a chemotaxis signal transduction system that modulates chemotaxis in response to various stimuli. Catalyzes the demethylation of specific methylglutamate residues introduced into the chemoreceptors (methyl-accepting chemotaxis proteins or MCP) by CheR. Also mediates the irreversible deamidation of specific glutamine residues to glutamic acid. In Salmonella paratyphi A (strain ATCC 9150 / SARB42), this protein is Protein-glutamate methylesterase/protein-glutamine glutaminase.